The primary structure comprises 392 residues: ADP-ribosylhydrolase ARH1 (392 aa).

Positions 79, 80, and 81 each coordinate Mg(2+). Lys109 provides a ligand contact to substrate. The interval 125-127 (IQT) is substrate. Residue Gly159 participates in substrate binding. Substrate regions lie at residues 192–194 (HNN), 309–311 (FSG), and 315–316 (SS). The Mg(2+) site is built by Asp348, Asp350, and Ser351.

Belongs to the ADP-ribosylglycohydrolase family. As to quaternary structure, monomer. Requires Mg(2+) as cofactor.

It carries out the reaction N(omega)-(ADP-D-ribosyl)-L-arginyl-[protein] + H2O = ADP-D-ribose + L-arginyl-[protein]. Functionally, specifically acts as an arginine mono-ADP-ribosylhydrolase by mediating the removal of mono-ADP-ribose attached to arginine residues on proteins. The protein is ADP-ribosylhydrolase ARH1 (adprh) of Dictyostelium discoideum (Social amoeba).